Consider the following 62-residue polypeptide: Flavodoxin (62 aa).

Residues 4–62 enclose the Flavodoxin-like domain; that stretch reads IGIFFGTDTGKTRKIAKMIHKQLGELADAPVNINRTTLDDFMAYPVLLLGTPTLGDGQL.

The protein belongs to the flavodoxin family. The cofactor is FMN.

Functionally, low-potential electron donor to a number of redox enzymes. NifF is the electron donor to nitrogenase. In Klebsiella oxytoca, this protein is Flavodoxin (nifF).